We begin with the raw amino-acid sequence, 780 residues long: Molybdenum cofactor sulfurase (780 aa).

Lys-246 is subject to N6-(pyridoxal phosphate)lysine. The active site involves Cys-413. In terms of domain architecture, MOSC spans Leu-635–Glu-780. Ser-734 is subject to Phosphoserine.

The protein belongs to the class-V pyridoxal-phosphate-dependent aminotransferase family. MOCOS subfamily. Requires pyridoxal 5'-phosphate as cofactor.

The enzyme catalyses Mo-molybdopterin + L-cysteine + AH2 = thio-Mo-molybdopterin + L-alanine + A + H2O. Sulfurates the molybdenum cofactor. Sulfation of molybdenum is essential for xanthine dehydrogenase (XDH) and aldehyde oxidase (ADO) enzymes in which molybdenum cofactor is liganded by 1 oxygen and 1 sulfur atom in active form. The chain is Molybdenum cofactor sulfurase from Drosophila yakuba (Fruit fly).